A 734-amino-acid polypeptide reads, in one-letter code: Photosystem I P700 chlorophyll a apoprotein A2 (734 aa).

The next 8 helical transmembrane spans lie at I46–A69, L135–Q158, L175–I199, I273–Y291, L330–Y353, A369–I395, A417–H439, and F517–V535. C559 and C568 together coordinate [4Fe-4S] cluster. The next 2 membrane-spanning stretches (helical) occupy residues A575 to W596 and L643 to I665. Residues H654, M662, and Y670 each coordinate chlorophyll a. W671 provides a ligand contact to phylloquinone. The helical transmembrane segment at L707–A727 threads the bilayer.

The protein belongs to the PsaA/PsaB family. In terms of assembly, the PsaA/B heterodimer binds the P700 chlorophyll special pair and subsequent electron acceptors. PSI consists of a core antenna complex that captures photons, and an electron transfer chain that converts photonic excitation into a charge separation. The eukaryotic PSI reaction center is composed of at least 11 subunits. It depends on P700 is a chlorophyll a/chlorophyll a' dimer, A0 is one or more chlorophyll a, A1 is one or both phylloquinones and FX is a shared 4Fe-4S iron-sulfur center. as a cofactor.

The protein localises to the plastid. The protein resides in the chloroplast thylakoid membrane. The catalysed reaction is reduced [plastocyanin] + hnu + oxidized [2Fe-2S]-[ferredoxin] = oxidized [plastocyanin] + reduced [2Fe-2S]-[ferredoxin]. PsaA and PsaB bind P700, the primary electron donor of photosystem I (PSI), as well as the electron acceptors A0, A1 and FX. PSI is a plastocyanin-ferredoxin oxidoreductase, converting photonic excitation into a charge separation, which transfers an electron from the donor P700 chlorophyll pair to the spectroscopically characterized acceptors A0, A1, FX, FA and FB in turn. Oxidized P700 is reduced on the lumenal side of the thylakoid membrane by plastocyanin. The polypeptide is Photosystem I P700 chlorophyll a apoprotein A2 (Piper cenocladum (Ant piper)).